The following is a 497-amino-acid chain: Protein FAM114A2 (497 aa).

Residues Met-1 to Ala-54 are disordered. A compositionally biased stretch (basic and acidic residues) spans Leu-19–Ser-34. Residues Ser-84 and Ser-205 each carry the phosphoserine modification. The disordered stretch occupies residues Val-344–Lys-364.

It belongs to the FAM114 family.

This is Protein FAM114A2 (Fam114a2) from Mus musculus (Mouse).